The primary structure comprises 467 residues: Abscisic acid 8'-hydroxylase 1 (467 aa).

A helical transmembrane segment spans residues 5–24 (ALFLTLFAGSLFLYFLRCLI). Residue cysteine 411 coordinates heme.

Belongs to the cytochrome P450 family. Heme is required as a cofactor. As to expression, mainly expressed in flowers, siliques, roots and stems. Lower expression in rosette leaves and dry seeds. Expressed in vascular tissues of embryo during the seed development.

Its subcellular location is the membrane. The enzyme catalyses 2-cis-(+)-abscisate + reduced [NADPH--hemoprotein reductase] + O2 = (+)-8'-hydroxyabscisate + oxidized [NADPH--hemoprotein reductase] + H2O + H(+). The protein operates within plant hormone degradation; abscisic acid degradation. In terms of biological role, involved in the oxidative degradation of abscisic acid. Plays an important role in determining abscisic acid levels in dry seeds and in the control of postgermination growth. This is Abscisic acid 8'-hydroxylase 1 (CYP707A1) from Arabidopsis thaliana (Mouse-ear cress).